The sequence spans 185 residues: Intraflagellar transport protein 22 homolog (185 aa).

GTP is bound by residues 10–17, 63–67, and 123–126; these read GPCESGKT, DCGGD, and HKPG. Serine 137 is modified (phosphoserine).

Belongs to the small GTPase superfamily. Rab family. In terms of assembly, component of the IFT complex B, at least composed of IFT20, IFT22, IFT25, IFT27, IFT46, IFT52, TRAF3IP1/IFT54, IFT57, IFT74, IFT80, IFT81, and IFT88. Interacts with IFT88. Interacts with CFAP61.

The protein resides in the cell projection. It is found in the cilium. Its function is as follows. Small GTPase-like component of the intraflagellar transport (IFT) complex B. The chain is Intraflagellar transport protein 22 homolog (IFT22) from Macaca fascicularis (Crab-eating macaque).